The primary structure comprises 384 residues: NAD(P) transhydrogenase subunit alpha part 1 (384 aa).

The segment at 126-136 is RQD loop; involved in interaction with PntB; the sequence is PRISRAQSMDI. NAD(+)-binding positions include 127 to 129, 132 to 135, 180 to 182, 202 to 204, G234, Q247, and L266; these read RIS, QSMD, VGV, and DVR.

It belongs to the AlaDH/PNT family. As to quaternary structure, heterotrimer of two alpha chains and a beta (PntB) chain; in Rhodospirillum, the alpha chain is made of two subunits (PntAA and PntAB) and forms a dimer.

The enzyme catalyses NAD(+) + NADPH + H(+)(in) = NADH + NADP(+) + H(+)(out). The transhydrogenation between NADH and NADP is coupled to respiration and ATP hydrolysis and functions as a proton pump across the membrane. The sequence is that of NAD(P) transhydrogenase subunit alpha part 1 (pntAA) from Rhodospirillum rubrum (strain ATCC 11170 / ATH 1.1.1 / DSM 467 / LMG 4362 / NCIMB 8255 / S1).